The chain runs to 261 residues: LIM and SH3 domain protein 1 (261 aa).

Met-1 is subject to N-acetylmethionine. In terms of domain architecture, LIM zinc-binding spans 5–56 (CARCGKIVYPTEKVNCLDKFWHKACFHCETCKMTLNMKNYKGYEKKPYCNAH). Lys-42 carries the N6-acetyllysine modification. Nebulin repeat units follow at residues 61-95 (SFTMVADTPENLRLKQQSELQSQVRYKEEFEKNKG) and 97-131 (GFSVVADTPELQRIKKTQDQISNIKYHEEFEKSRM). Phosphothreonine is present on Thr-68. Lys-75 carries the N6-methyllysine modification. Ser-99 bears the Phosphoserine mark. A Phosphothreonine modification is found at Thr-104. A disordered region spans residues 111–186 (KKTQDQISNI…QPVAQSYGGY (76 aa)). Residue Lys-112 is modified to N6-succinyllysine. Ser-118 bears the Phosphoserine mark. Residues 121–130 (KYHEEFEKSR) are compositionally biased toward basic and acidic residues. A phosphoserine mark is found at Ser-134 and Ser-146. The span at 167–183 (SAPVYQQPQQQPVAQSY) shows a compositional bias: low complexity. Residues 202–261 (GGGKRYRAVYDYSAADEDEVSFQDGDTIVNVQQIDDGWMYGTVERTGDTGMLPANYVEAI) enclose the SH3 domain.

In terms of assembly, interacts with F-actin. Interacts with ANKRD54. Interacts with KBTBD10.

The protein localises to the cytoplasm. Its subcellular location is the cell cortex. The protein resides in the cytoskeleton. Its function is as follows. Plays an important role in the regulation of dynamic actin-based, cytoskeletal activities. Agonist-dependent changes in LASP1 phosphorylation may also serve to regulate actin-associated ion transport activities, not only in the parietal cell but also in certain other F-actin-rich secretory epithelial cell types. This chain is LIM and SH3 domain protein 1 (LASP1), found in Homo sapiens (Human).